Reading from the N-terminus, the 177-residue chain is Meiotic chromosome segregation protein C17A2.07c (177 aa).

The tract at residues 71 to 90 (EDDSINKPTEEADEAPRTQL) is disordered. Residues 74-86 (SINKPTEEADEAP) are compositionally biased toward basic and acidic residues.

It localises to the nucleus. Involved in meiotic chromosome segregation. The sequence is that of Meiotic chromosome segregation protein C17A2.07c from Schizosaccharomyces pombe (strain 972 / ATCC 24843) (Fission yeast).